The chain runs to 330 residues: Beta-hexosaminidase (330 aa).

Substrate-binding positions include D62, R70, R133, and 163–164 (KH). The active-site Proton donor/acceptor is the H176. D246 acts as the Nucleophile in catalysis.

This sequence belongs to the glycosyl hydrolase 3 family. NagZ subfamily.

It is found in the cytoplasm. It catalyses the reaction Hydrolysis of terminal non-reducing N-acetyl-D-hexosamine residues in N-acetyl-beta-D-hexosaminides.. Its pathway is cell wall biogenesis; peptidoglycan recycling. Plays a role in peptidoglycan recycling by cleaving the terminal beta-1,4-linked N-acetylglucosamine (GlcNAc) from peptide-linked peptidoglycan fragments, giving rise to free GlcNAc, anhydro-N-acetylmuramic acid and anhydro-N-acetylmuramic acid-linked peptides. In Idiomarina loihiensis (strain ATCC BAA-735 / DSM 15497 / L2-TR), this protein is Beta-hexosaminidase.